Consider the following 125-residue polypeptide: Meiotically up-regulated gene 112 protein (125 aa).

The protein localises to the golgi apparatus. Has a role in meiosis. The protein is Meiotically up-regulated gene 112 protein (mug112) of Schizosaccharomyces pombe (strain 972 / ATCC 24843) (Fission yeast).